The sequence spans 429 residues: MTRSDELFEQAKKTIPGGVNSPVRAFNGVGGSPRFIEKADGAYIFDADGKKYIDYVGSWGPMILGHNHPKIRAAVLEAVENGLSFGAPTELEVTMAEKVIEMVPSMEQVRMVSSGTEATMSAIRLARGFTSRDKILKFEGCYHGHADCLLVKAGSGALTLGQPSSPGIPEDFAKHTLTATYNDLDSVKALFEQYPDAISCIILEPVAGNMNCIPPVEGFLEGLRAICDQYGALMIIDEVMTGFRVSKSGAQGHYGVTPDLTTLGKVIGGGMPVGAFGGRKDVMQFIAPTGPVYQAGTLSGNPIAMSAGLAQMEALCEDGVYEQLAAKTQYIAEGFKAAANKHGIPMAINYVGGMFGFFFTDEEKVTSFEQVTKCDAEKFPEFYHGMLDEGVYLAPSAYEAGFLSLAHGEAELEATLAAAERVFAKMAKG.

Lys265 is subject to N6-(pyridoxal phosphate)lysine.

The protein belongs to the class-III pyridoxal-phosphate-dependent aminotransferase family. HemL subfamily. Homodimer. Pyridoxal 5'-phosphate serves as cofactor.

The protein localises to the cytoplasm. It carries out the reaction (S)-4-amino-5-oxopentanoate = 5-aminolevulinate. Its pathway is porphyrin-containing compound metabolism; protoporphyrin-IX biosynthesis; 5-aminolevulinate from L-glutamyl-tRNA(Glu): step 2/2. This Shewanella piezotolerans (strain WP3 / JCM 13877) protein is Glutamate-1-semialdehyde 2,1-aminomutase.